A 103-amino-acid polypeptide reads, in one-letter code: UPF0091 protein PH0944 (103 aa).

This sequence belongs to the UPF0091 family.

In Pyrococcus horikoshii (strain ATCC 700860 / DSM 12428 / JCM 9974 / NBRC 100139 / OT-3), this protein is UPF0091 protein PH0944.